The primary structure comprises 227 residues: Claudin-15 (227 aa).

A topological domain (cytoplasmic) is located at residue Met1. The helical transmembrane segment at 2–24 threads the bilayer; that stretch reads SIAVETFGFFMSALGLLMLGVTL. Over 25–74 the chain is Extracellular; the sequence is PNSYWRVSTVHGNVITTNTIFENLWYSCATDSLGVSNCWDFPSMLALSGY. Cysteines 52 and 62 form a disulfide. A helical membrane pass occupies residues 75 to 99; the sequence is VQGCRALMITAILLGFLGLFLGMVG. Topologically, residues 100 to 115 are cytoplasmic; it reads LRCTNVGNIDLSRKAK. The residue at position 111 (Ser111) is a Phosphoserine. A helical transmembrane segment spans residues 116-140; it reads LLAIAGAFHILAGACGMVAISWYAV. The Extracellular segment spans residues 141-159; it reads NITTDFFNPLYVGTKYELG. The interval 146–147 is important for the formation of tight-junction strand-like structures; that stretch reads FF. Residues 160–182 form a helical membrane-spanning segment; the sequence is SALYLGWSASLLSILGGICVFST. Over 183-227 the chain is Cytoplasmic; sequence CCCDSKEDPATRVGLPYKPSTVVTARATSDESDVSFGKYGKNAYV. A phosphoserine mark is found at Ser211, Ser214, and Ser217.

This sequence belongs to the claudin family. Can form homo- and heteropolymeric tight junction strands. Palmitoylated. As to expression, detected in kidney, jejunum and colon (at protein level).

The protein resides in the cell junction. It is found in the tight junction. The protein localises to the cell membrane. The enzyme catalyses Na(+)(in) = Na(+)(out). It catalyses the reaction K(+)(in) = K(+)(out). It carries out the reaction Cs(+)(in) = Cs(+)(out). The catalysed reaction is Rb(+)(in) = Rb(+)(out). The enzyme catalyses Li(+)(in) = Li(+)(out). It catalyses the reaction NH4(+)(in) = NH4(+)(out). It carries out the reaction methylamine(out) = methylamine(in). The catalysed reaction is H2O(in) = H2O(out). Functionally, forms paracellular channels: polymerizes in tight junction strands with cation- and water-selective channels through the strands, conveying epithelial permeability in a process known as paracellular tight junction permeability. In intestinal epithelium, allows for sodium and water fluxes from the peritoneal side to the lumen of the intestine to regulate nutrient absorption and intestinal morphogenesis. The sequence is that of Claudin-15 from Rattus norvegicus (Rat).